Reading from the N-terminus, the 527-residue chain is ATP synthase subunit alpha (527 aa).

An ATP-binding site is contributed by 172 to 179; the sequence is GDRQTGKT.

This sequence belongs to the ATPase alpha/beta chains family. As to quaternary structure, F-type ATPases have 2 components, CF(1) - the catalytic core - and CF(0) - the membrane proton channel. CF(1) has five subunits: alpha(3), beta(3), gamma(1), delta(1), epsilon(1). CF(0) has three main subunits: a(1), b(2) and c(9-12). The alpha and beta chains form an alternating ring which encloses part of the gamma chain. CF(1) is attached to CF(0) by a central stalk formed by the gamma and epsilon chains, while a peripheral stalk is formed by the delta and b chains.

It localises to the cell inner membrane. The catalysed reaction is ATP + H2O + 4 H(+)(in) = ADP + phosphate + 5 H(+)(out). Produces ATP from ADP in the presence of a proton gradient across the membrane. The alpha chain is a regulatory subunit. The chain is ATP synthase subunit alpha from Bacteroides fragilis (strain ATCC 25285 / DSM 2151 / CCUG 4856 / JCM 11019 / LMG 10263 / NCTC 9343 / Onslow / VPI 2553 / EN-2).